The chain runs to 145 residues: Large ribosomal subunit protein uL13 (145 aa).

This sequence belongs to the universal ribosomal protein uL13 family. In terms of assembly, part of the 50S ribosomal subunit.

This protein is one of the early assembly proteins of the 50S ribosomal subunit, although it is not seen to bind rRNA by itself. It is important during the early stages of 50S assembly. The polypeptide is Large ribosomal subunit protein uL13 (Bacillus cytotoxicus (strain DSM 22905 / CIP 110041 / 391-98 / NVH 391-98)).